Reading from the N-terminus, the 182-residue chain is Epoxyqueuosine reductase QueH (182 aa).

Residues C10, C11, C85, and C88 each coordinate [4Fe-4S] cluster. C165 and C167 are oxidised to a cystine.

Belongs to the QueH family.

The enzyme catalyses epoxyqueuosine(34) in tRNA + AH2 = queuosine(34) in tRNA + A + H2O. Its pathway is tRNA modification; tRNA-queuosine biosynthesis. Catalyzes the conversion of epoxyqueuosine (oQ) to queuosine (Q), which is a hypermodified base found in the wobble positions of tRNA(Asp), tRNA(Asn), tRNA(His) and tRNA(Tyr). This Dehalococcoides mccartyi (strain ATCC BAA-2266 / KCTC 15142 / 195) (Dehalococcoides ethenogenes (strain 195)) protein is Epoxyqueuosine reductase QueH.